Reading from the N-terminus, the 327-residue chain is D-alanine--D-alanine ligase (327 aa).

Residues 113 to 312 (KRLWMTHGLA…YEDFVLQVLA (200 aa)) enclose the ATP-grasp domain. Position 139 to 194 (139 to 194 (VADLGLPLIVKPAREGSSIGLTKVTAADQMRAAFDKAAALDNDVIAETFVDGAELT)) interacts with ATP. Mg(2+) contacts are provided by Asp-266, Glu-279, and Asn-281.

It belongs to the D-alanine--D-alanine ligase family. The cofactor is Mg(2+). Mn(2+) serves as cofactor.

Its subcellular location is the cytoplasm. It carries out the reaction 2 D-alanine + ATP = D-alanyl-D-alanine + ADP + phosphate + H(+). The protein operates within cell wall biogenesis; peptidoglycan biosynthesis. In terms of biological role, cell wall formation. This Cupriavidus taiwanensis (strain DSM 17343 / BCRC 17206 / CCUG 44338 / CIP 107171 / LMG 19424 / R1) (Ralstonia taiwanensis (strain LMG 19424)) protein is D-alanine--D-alanine ligase.